A 446-amino-acid chain; its full sequence is Chromosomal replication initiator protein DnaA (446 aa).

Residues 1-92 form a domain I, interacts with DnaA modulators region; it reads MENISDLWNS…SQAEEEIDLP (92 aa). The interval 93-109 is domain II; it reads PSKPNAAQDDSNHLPQS. The segment at 110–326 is domain III, AAA+ region; that stretch reads MLNPKYTFDT…GALIRVVAYS (217 aa). ATP-binding residues include G154, G156, K157, and T158. Residues 327–446 are domain IV, binds dsDNA; it reads SLINKDINAD…QVEEINDILK (120 aa).

This sequence belongs to the DnaA family. As to quaternary structure, oligomerizes as a right-handed, spiral filament on DNA at oriC.

The protein resides in the cytoplasm. In terms of biological role, plays an essential role in the initiation and regulation of chromosomal replication. ATP-DnaA binds to the origin of replication (oriC) to initiate formation of the DNA replication initiation complex once per cell cycle. Binds the DnaA box (a 9 base pair repeat at the origin) and separates the double-stranded (ds)DNA. Forms a right-handed helical filament on oriC DNA; dsDNA binds to the exterior of the filament while single-stranded (ss)DNA is stabiized in the filament's interior. The ATP-DnaA-oriC complex binds and stabilizes one strand of the AT-rich DNA unwinding element (DUE), permitting loading of DNA polymerase. After initiation quickly degrades to an ADP-DnaA complex that is not apt for DNA replication. Binds acidic phospholipids. The chain is Chromosomal replication initiator protein DnaA from Bacillus cereus (strain 03BB102).